The primary structure comprises 358 residues: WD repeat domain phosphoinositide-interacting protein 4 (358 aa).

WD repeat units lie at residues 2–40 (AQQRGVNSLQFNQDQSCFCCAMETGVRIYNVEPLMEKGH) and 188–228 (AHQS…KLVE). Positions 229 to 232 (LRRG) match the L/FRRG motif motif. Residues 233–272 (TDPATLYCINFSHDSSFLCASSDKGTVHIFALKDTKLNRR) form a WD 3 repeat.

The protein belongs to the WD repeat PROPPIN family.

The protein localises to the preautophagosomal structure. In terms of biological role, component of the autophagy machinery that controls the major intracellular degradation process by which cytoplasmic materials are packaged into autophagosomes and delivered to lysosomes for degradation. Binds phosphatidylinositol 3-phosphate (PtdIns3P). The chain is WD repeat domain phosphoinositide-interacting protein 4 (wdr45) from Danio rerio (Zebrafish).